The following is a 214-amino-acid chain: Ribonuclease P protein component 3 (214 aa).

It belongs to the eukaryotic/archaeal RNase P protein component 3 family. As to quaternary structure, consists of a catalytic RNA component and at least 4-5 protein subunits. Forms a subcomplex with Rnp2 which stimulates the catalytic RNA.

Its subcellular location is the cytoplasm. The catalysed reaction is Endonucleolytic cleavage of RNA, removing 5'-extranucleotides from tRNA precursor.. In terms of biological role, part of ribonuclease P, a protein complex that generates mature tRNA molecules by cleaving their 5'-ends. The RNA is catalytic, but its KM for pre-tRNA is 170-fold decreased in the presence of the 4 known protein subunits (Rnp1-4). The protein subunits also decrease the amount of Mg(2+) needed for activity. The protein is Ribonuclease P protein component 3 of Pyrococcus furiosus (strain ATCC 43587 / DSM 3638 / JCM 8422 / Vc1).